Consider the following 439-residue polypeptide: ATP-dependent RNA helicase SUB2 (439 aa).

Acidic residues predominate over residues 1–19; sequence MSHEGEEDLLEYSDNEQEI. Residues 1 to 48 form a disordered region; it reads MSHEGEEDLLEYSDNEQEIQVDNKETAVEGTTENEATQENGEADKKGS. Positions 29–40 are enriched in polar residues; the sequence is EGTTENEATQEN. Positions 55–83 match the Q motif motif; it reads TGFKDFLLKPELSRAIIDCGFEHPSEVQQ. The 176-residue stretch at 86 to 261 folds into the Helicase ATP-binding domain; sequence IPQSIHGTDV…RRFLQNPLEI (176 aa). Position 99–106 (99–106) interacts with ATP; it reads AKSGLGKT. Residues 208–211 carry the DECD box motif; that stretch reads DECD. The Helicase C-terminal domain maps to 273-434; that stretch reads GLQQYYIKLE…EFPEEGIDPS (162 aa).

This sequence belongs to the DEAD box helicase family. DECD subfamily.

It is found in the nucleus. The catalysed reaction is ATP + H2O = ADP + phosphate + H(+). Functionally, ATP-binding RNA helicase involved in transcription elongation and required for the export of mRNA out of the nucleus. SUB2 also plays a role in pre-mRNA splicing and spliceosome assembly. May be involved in rDNA and telomeric silencing, and maintenance of genome integrity. This is ATP-dependent RNA helicase SUB2 (SUB2) from Candida glabrata (strain ATCC 2001 / BCRC 20586 / JCM 3761 / NBRC 0622 / NRRL Y-65 / CBS 138) (Yeast).